The sequence spans 735 residues: 1,4-alpha-glucan branching enzyme GlgB 1 (735 aa).

Aspartate 418 (nucleophile) is an active-site residue. Glutamate 471 acts as the Proton donor in catalysis.

It belongs to the glycosyl hydrolase 13 family. GlgB subfamily. In terms of assembly, monomer.

It carries out the reaction Transfers a segment of a (1-&gt;4)-alpha-D-glucan chain to a primary hydroxy group in a similar glucan chain.. It participates in glycan biosynthesis; glycogen biosynthesis. Its function is as follows. Catalyzes the formation of the alpha-1,6-glucosidic linkages in glycogen by scission of a 1,4-alpha-linked oligosaccharide from growing alpha-1,4-glucan chains and the subsequent attachment of the oligosaccharide to the alpha-1,6 position. The sequence is that of 1,4-alpha-glucan branching enzyme GlgB 1 from Rhizobium etli (strain ATCC 51251 / DSM 11541 / JCM 21823 / NBRC 15573 / CFN 42).